The chain runs to 184 residues: Tumor necrosis factor receptor superfamily member 13C (184 aa).

Residues 1–78 (MRRGPRSLRG…EAALPLPGLL (78 aa)) lie on the Extracellular side of the membrane. Residues 18–35 (PCVPAECFDLLVRHCVAC) form a TNFR-Cys; truncated repeat. Cystine bridges form between C19/C32 and C24/C35. The essential for TNFSF13B/TALL1/BAFF/BLyS binding stretch occupies residues 26-31 (DLLVRH). The disordered stretch occupies residues 43–62 (PKPAGASSPAPRTALQPQES). Residues 79–99 (FGAPALLGLALVLALVLVGLV) form a helical; Signal-anchor for type III membrane protein membrane-spanning segment. Residues 100 to 184 (SWRRRQRRLR…TTKTAGPEQQ (85 aa)) lie on the Cytoplasmic side of the membrane. Residues 107 to 184 (RLRGASSAEA…TTKTAGPEQQ (78 aa)) are disordered. The segment covering 118–128 (DGDKDAPEPLD) has biased composition (basic and acidic residues). Residues 168–184 (LGSTELVTTKTAGPEQQ) are compositionally biased toward polar residues.

As to expression, highly expressed in spleen and lymph node, and in resting B-cells. Detected at lower levels in activated B-cells, resting CD4+ T-cells, in thymus and peripheral blood leukocytes.

Its subcellular location is the membrane. In terms of biological role, B-cell receptor specific for TNFSF13B/TALL1/BAFF/BLyS. Promotes the survival of mature B-cells and the B-cell response. The chain is Tumor necrosis factor receptor superfamily member 13C (TNFRSF13C) from Homo sapiens (Human).